A 513-amino-acid chain; its full sequence is Alanine--glyoxylate aminotransferase 2, mitochondrial (513 aa).

A mitochondrion-targeting transit peptide spans M1 to T40. K56 is modified (N6-acetyllysine). N6-acetyllysine; alternate is present on K70. At K70 the chain carries N6-succinyllysine; alternate. The residue at position 83 (K83) is an N6-acetyllysine. K261 is subject to N6-acetyllysine; alternate. Position 261 is an N6-succinyllysine; alternate (K261). Residue K303 is modified to N6-succinyllysine. At K349 the chain carries N6-(pyridoxal phosphate)lysine. K416 and K419 each carry N6-acetyllysine; alternate. N6-succinyllysine; alternate is present on residues K416 and K419. N6-acetyllysine is present on K453.

The protein belongs to the class-III pyridoxal-phosphate-dependent aminotransferase family. As to quaternary structure, homotetramer. Requires pyridoxal 5'-phosphate as cofactor. Expressed in the liver and kidney.

Its subcellular location is the mitochondrion. It carries out the reaction glyoxylate + L-alanine = glycine + pyruvate. The enzyme catalyses (R)-3-amino-2-methylpropanoate + pyruvate = 2-methyl-3-oxopropanoate + L-alanine. It catalyses the reaction 3-oxopropanoate + L-alanine = beta-alanine + pyruvate. The catalysed reaction is 2-oxobutanoate + L-alanine = (2S)-2-aminobutanoate + pyruvate. It carries out the reaction N(omega),N(omega)-dimethyl-L-arginine + pyruvate = 5-(3,3-dimethylguanidino)-2-oxopentanoate + L-alanine. The enzyme catalyses N(omega),N('omega)-dimethyl-L-arginine + pyruvate = 5-(3,3'-dimethylguanidino)-2-oxopentanoate + L-alanine. It catalyses the reaction N(omega),N(omega)-dimethyl-L-arginine + glyoxylate = 5-(3,3-dimethylguanidino)-2-oxopentanoate + glycine. The catalysed reaction is N(omega),N('omega)-dimethyl-L-arginine + glyoxylate = 5-(3,3'-dimethylguanidino)-2-oxopentanoate + glycine. It carries out the reaction N(omega)-methyl-L-arginine + pyruvate = 5-(3-methylguanidino)-2-oxopentanoate + L-alanine. The enzyme catalyses N(omega)-methyl-L-arginine + glyoxylate = 5-(3-methylguanidino)-2-oxopentanoate + glycine. It catalyses the reaction L-ornithine + pyruvate = 5-amino-2-oxopentanoate + L-alanine. The catalysed reaction is L-ornithine + glyoxylate = 5-amino-2-oxopentanoate + glycine. It carries out the reaction (2S)-2-aminobutanoate + glyoxylate = 2-oxobutanoate + glycine. The enzyme catalyses N(omega),N(omega)-dimethyl-L-arginine + oxaloacetate = 5-(3,3-dimethylguanidino)-2-oxopentanoate + L-aspartate. It catalyses the reaction oxaloacetate + L-alanine = L-aspartate + pyruvate. The catalysed reaction is N(omega),N(omega)-dimethyl-L-arginine + 2-oxobutanoate = 5-(3,3-dimethylguanidino)-2-oxopentanoate + (2S)-2-aminobutanoate. It carries out the reaction 2-oxopentanoate + N(omega),N(omega)-dimethyl-L-arginine = 5-(3,3-dimethylguanidino)-2-oxopentanoate + L-2-aminopentanoate. The enzyme catalyses 2-oxohexanoate + N(omega),N(omega)-dimethyl-L-arginine = L-2-aminohexanoate + 5-(3,3-dimethylguanidino)-2-oxopentanoate. (R)-3-amino-2-methylpropionate--pyruvate transaminase and beta-alanine-pyruvate aminotransferase are inhibited by aminooxyacetic acid. Multifunctional aminotransferase with a broad substrate specificity. Catalyzes the conversion of glyoxylate to glycine using alanine as the amino donor. Catalyzes metabolism of not L- but the D-isomer of D-beta-aminoisobutyric acid to generate 2-methyl-3-oxopropanoate and alanine. Catalyzes the transfer of the amino group from beta-alanine to pyruvate to yield L-alanine and 3-oxopropanoate. Can metabolize NG-monomethyl-L-arginine (NMMA), asymmetric NG,NG-dimethyl-L-arginine (ADMA) and symmetric NG,N'G-dimethyl-L-arginine (SDMA). ADMA is a potent inhibitor of nitric-oxide (NO) synthase, and this activity provides mechanism through which the kidney regulates blood pressure. This is Alanine--glyoxylate aminotransferase 2, mitochondrial (Agxt2) from Mus musculus (Mouse).